Reading from the N-terminus, the 216-residue chain is Adenylate kinase (216 aa).

An ATP-binding site is contributed by 10–15 (GAGKGT). Residues 30–59 (STGDMFRAAIKEGTPLGLQAKEYMDRGDLV) form an NMP region. AMP is bound by residues T31, R36, 57–59 (DLV), 85–88 (GFPR), and Q92. An LID region spans residues 126-163 (GRRICKNCGATYHLVFNPPAKSGVCDKCGGELYQRADD). R127 is a binding site for ATP. The Zn(2+) site is built by C130 and C133. 136-137 (TY) lines the ATP pocket. Zn(2+)-binding residues include C150 and C153. Residues R160 and R171 each coordinate AMP. Q199 lines the ATP pocket.

Belongs to the adenylate kinase family. In terms of assembly, monomer.

The protein resides in the cytoplasm. The catalysed reaction is AMP + ATP = 2 ADP. It participates in purine metabolism; AMP biosynthesis via salvage pathway; AMP from ADP: step 1/1. Functionally, catalyzes the reversible transfer of the terminal phosphate group between ATP and AMP. Plays an important role in cellular energy homeostasis and in adenine nucleotide metabolism. In Geobacillus sp. (strain WCH70), this protein is Adenylate kinase.